The sequence spans 83 residues: Cell division topological specificity factor (83 aa).

Belongs to the MinE family.

Prevents the cell division inhibition by proteins MinC and MinD at internal division sites while permitting inhibition at polar sites. This ensures cell division at the proper site by restricting the formation of a division septum at the midpoint of the long axis of the cell. The chain is Cell division topological specificity factor from Deinococcus deserti (strain DSM 17065 / CIP 109153 / LMG 22923 / VCD115).